A 247-amino-acid polypeptide reads, in one-letter code: Carboxy-S-adenosyl-L-methionine synthase (247 aa).

S-adenosyl-L-methionine-binding positions include Y39, 64 to 66 (GCS), 89 to 90 (DN), 117 to 118 (DI), N132, and R199.

This sequence belongs to the class I-like SAM-binding methyltransferase superfamily. Cx-SAM synthase family. In terms of assembly, homodimer.

It catalyses the reaction prephenate + S-adenosyl-L-methionine = carboxy-S-adenosyl-L-methionine + 3-phenylpyruvate + H2O. Catalyzes the conversion of S-adenosyl-L-methionine (SAM) to carboxy-S-adenosyl-L-methionine (Cx-SAM). This chain is Carboxy-S-adenosyl-L-methionine synthase, found in Pectobacterium atrosepticum (strain SCRI 1043 / ATCC BAA-672) (Erwinia carotovora subsp. atroseptica).